A 356-amino-acid chain; its full sequence is MIETDKLATEQRIIAATPASSHEEVFERALRPRQLDDYVGQEKVRGQLEIFIEAAKRRSEPLDHVLLFGPPGLGKTTLAHIIAREMGVNLRQTSGPVLERAGDLAALLTNLEANDVLFIDEIHRLSPVVEEILYPALEDYQIDIMIGEGPAARSVKLDLQPFTLVGATTRAGMLTNPLRDRFGIVARLEFYDAEQLSRIVRRSASLLNAQIDPNGALEIAKRARGTPRIANRLLRRVRDFAEVKADGQITAAVADAALAMLDVDPVGFDLMDRKLLEAILYKFDGGPVGIDNLAAAIGEERDTIEDVLEPYLIQQGFLQRTPRGRVATLLTYRHFGLSVPDARRTERDEWDTPDGK.

Residues 4–191 (TDKLATEQRI…FGIVARLEFY (188 aa)) are large ATPase domain (RuvB-L). Residues leucine 30, arginine 31, glycine 72, lysine 75, threonine 76, threonine 77, 138-140 (EDY), arginine 181, tyrosine 191, and arginine 228 contribute to the ATP site. Threonine 76 is a Mg(2+) binding site. Positions 192–262 (DAEQLSRIVR…VADAALAMLD (71 aa)) are small ATPAse domain (RuvB-S). The head domain (RuvB-H) stretch occupies residues 265–356 (PVGFDLMDRK…RDEWDTPDGK (92 aa)). DNA is bound by residues arginine 301, arginine 320, and arginine 325.

It belongs to the RuvB family. As to quaternary structure, homohexamer. Forms an RuvA(8)-RuvB(12)-Holliday junction (HJ) complex. HJ DNA is sandwiched between 2 RuvA tetramers; dsDNA enters through RuvA and exits via RuvB. An RuvB hexamer assembles on each DNA strand where it exits the tetramer. Each RuvB hexamer is contacted by two RuvA subunits (via domain III) on 2 adjacent RuvB subunits; this complex drives branch migration. In the full resolvosome a probable DNA-RuvA(4)-RuvB(12)-RuvC(2) complex forms which resolves the HJ.

The protein resides in the cytoplasm. The enzyme catalyses ATP + H2O = ADP + phosphate + H(+). In terms of biological role, the RuvA-RuvB-RuvC complex processes Holliday junction (HJ) DNA during genetic recombination and DNA repair, while the RuvA-RuvB complex plays an important role in the rescue of blocked DNA replication forks via replication fork reversal (RFR). RuvA specifically binds to HJ cruciform DNA, conferring on it an open structure. The RuvB hexamer acts as an ATP-dependent pump, pulling dsDNA into and through the RuvAB complex. RuvB forms 2 homohexamers on either side of HJ DNA bound by 1 or 2 RuvA tetramers; 4 subunits per hexamer contact DNA at a time. Coordinated motions by a converter formed by DNA-disengaged RuvB subunits stimulates ATP hydrolysis and nucleotide exchange. Immobilization of the converter enables RuvB to convert the ATP-contained energy into a lever motion, pulling 2 nucleotides of DNA out of the RuvA tetramer per ATP hydrolyzed, thus driving DNA branch migration. The RuvB motors rotate together with the DNA substrate, which together with the progressing nucleotide cycle form the mechanistic basis for DNA recombination by continuous HJ branch migration. Branch migration allows RuvC to scan DNA until it finds its consensus sequence, where it cleaves and resolves cruciform DNA. This is Holliday junction branch migration complex subunit RuvB from Burkholderia cenocepacia (strain HI2424).